The chain runs to 127 residues: MLSLLSKAVSLAILVTAVVASPAGNGVEWSGGGTTTVTVTASSPTTTVTQSQCSTGDQKCCQSVQNSSAAGVSSLLGLLGIVLSGTDVPVGLTCLPIVGGACQSQAVCCTDNSYGNLISLGCSPLQL.

Residues 1 to 20 (MLSLLSKAVSLAILVTAVVA) form the signal peptide. 4 cysteine pairs are disulfide-bonded: C53-C108, C60-C102, C61-C94, and C109-C122. N66 is a glycosylation site (N-linked (GlcNAc...) asparagine).

It belongs to the fungal hydrophobin family. Self-assembles to form functional amyloid fibrils called rodlets. Self-assembly into fibrillar rodlets occurs spontaneously at hydrophobic:hydrophilic interfaces and the rodlets further associate laterally to form amphipathic monolayers. In terms of tissue distribution, expressed everywhere in the mycelial tissues of developing fruiting bodies except for the top parts of the pileus (cap) and for the prehymenophore; but high level of the transcript is detected in the parts surrounding the prehymenophore.

It is found in the secreted. The protein resides in the cell wall. In terms of biological role, aerial growth, conidiation, and dispersal of filamentous fungi in the environment rely upon a capability of their secreting small amphipathic proteins called hydrophobins (HPBs) with low sequence identity. Class I can self-assemble into an outermost layer of rodlet bundles on aerial cell surfaces, conferring cellular hydrophobicity that supports fungal growth, development and dispersal; whereas Class II form highly ordered films at water-air interfaces through intermolecular interactions but contribute nothing to the rodlet structure. Hyd1 is a class I hydrophobin that plays a role in fruiting body initiation rather than in mature fruit body maintenance. Seems to be involved in the formation in the extracellular matrix of lined air channels with a hydrophobic membrane. These channels may help to provide gas exchange during respiration in mycelial tissues of developing fruiting bodies and are formed all over the mycelial tissues of these developing fruiting bodies except for the top parts of the pileus (cap) and for the prehymenophore. The sequence is that of Class I hydrophobin 1 from Lentinula edodes (Shiitake mushroom).